A 294-amino-acid chain; its full sequence is Phosphoribosylaminoimidazole-succinocarboxamide synthase (294 aa).

It belongs to the SAICAR synthetase family.

The enzyme catalyses 5-amino-1-(5-phospho-D-ribosyl)imidazole-4-carboxylate + L-aspartate + ATP = (2S)-2-[5-amino-1-(5-phospho-beta-D-ribosyl)imidazole-4-carboxamido]succinate + ADP + phosphate + 2 H(+). It participates in purine metabolism; IMP biosynthesis via de novo pathway; 5-amino-1-(5-phospho-D-ribosyl)imidazole-4-carboxamide from 5-amino-1-(5-phospho-D-ribosyl)imidazole-4-carboxylate: step 1/2. The polypeptide is Phosphoribosylaminoimidazole-succinocarboxamide synthase (Thermoplasma acidophilum (strain ATCC 25905 / DSM 1728 / JCM 9062 / NBRC 15155 / AMRC-C165)).